The following is a 445-amino-acid chain: GTPase Obg (445 aa).

Residues 7–164 (PEFVDCVTVE…RKLRLEVKSI (158 aa)) enclose the Obg domain. Residues 165-342 (ADVALVGFPS…FTLRLGEICQ (178 aa)) form the OBG-type G domain. GTP-binding positions include 171–178 (GFPSVGKS), 196–200 (FTTLH), 217–220 (DVPG), 291–294 (NKID), and 323–325 (SAV). Residues serine 178 and threonine 198 each contribute to the Mg(2+) site. An OCT domain is found at 357 to 434 (IPAKNTPEFS…IGGVIFTWDP (78 aa)).

The protein belongs to the TRAFAC class OBG-HflX-like GTPase superfamily. OBG GTPase family. As to quaternary structure, monomer. Mg(2+) is required as a cofactor.

The protein localises to the cytoplasm. Its function is as follows. An essential GTPase which binds GTP, GDP and possibly (p)ppGpp with moderate affinity, with high nucleotide exchange rates and a fairly low GTP hydrolysis rate. Plays a role in control of the cell cycle, stress response, ribosome biogenesis and in those bacteria that undergo differentiation, in morphogenesis control. The chain is GTPase Obg from Tropheryma whipplei (strain Twist) (Whipple's bacillus).